The chain runs to 131 residues: Protein ApaG (131 aa).

In terms of domain architecture, ApaG spans 3–127; sequence RAVTRQIEVT…FSLDSPDGGK (125 aa).

The protein is Protein ApaG of Bradyrhizobium sp. (strain BTAi1 / ATCC BAA-1182).